The following is a 332-amino-acid chain: Ketol-acid reductoisomerase (NADP(+)) (332 aa).

Residues 1 to 182 form the KARI N-terminal Rossmann domain; that stretch reads MAVIYYDKDC…GSNRAGILET (182 aa). Residues 25-28 and 83-86 each bind NADP(+); these read YGAQ and DTSQ. The active site involves His-108. Gly-134 is an NADP(+) binding site. The region spanning 183-328 is the KARI C-terminal knotted domain; it reads TFAEETETDL…AELRSMMSWL (146 aa). Residues Asp-191, Glu-195, Glu-227, and Glu-231 each coordinate Mg(2+). Substrate is bound at residue Ser-252.

This sequence belongs to the ketol-acid reductoisomerase family. Mg(2+) is required as a cofactor.

It catalyses the reaction (2R)-2,3-dihydroxy-3-methylbutanoate + NADP(+) = (2S)-2-acetolactate + NADPH + H(+). It carries out the reaction (2R,3R)-2,3-dihydroxy-3-methylpentanoate + NADP(+) = (S)-2-ethyl-2-hydroxy-3-oxobutanoate + NADPH + H(+). It functions in the pathway amino-acid biosynthesis; L-isoleucine biosynthesis; L-isoleucine from 2-oxobutanoate: step 2/4. It participates in amino-acid biosynthesis; L-valine biosynthesis; L-valine from pyruvate: step 2/4. Functionally, involved in the biosynthesis of branched-chain amino acids (BCAA). Catalyzes an alkyl-migration followed by a ketol-acid reduction of (S)-2-acetolactate (S2AL) to yield (R)-2,3-dihydroxy-isovalerate. In the isomerase reaction, S2AL is rearranged via a Mg-dependent methyl migration to produce 3-hydroxy-3-methyl-2-ketobutyrate (HMKB). In the reductase reaction, this 2-ketoacid undergoes a metal-dependent reduction by NADPH to yield (R)-2,3-dihydroxy-isovalerate. The polypeptide is Ketol-acid reductoisomerase (NADP(+)) (Dehalococcoides mccartyi (strain ATCC BAA-2100 / JCM 16839 / KCTC 5957 / BAV1)).